The primary structure comprises 459 residues: Putative peroxisome assembly protein 12 (459 aa).

Residues 1–16 are Peroxisomal matrix-facing; that stretch reads MFMFNFDNGHDPNRPS. The chain crosses the membrane as a helical span at residues 17–44; that stretch reads FFEMLNQHQMMPSFKPALKYIFTVLSQR. Over 45-47 the chain is Cytoplasmic; sequence NPK. A helical transmembrane segment spans residues 48–72; sequence FRYIVNYYDECFYSLLLLLEYHYLK. The Peroxisomal matrix segment spans residues 73-158; that stretch reads YYEGSFSENF…AKDDLNTMIQ (86 aa). Residues 159-196 traverse the membrane as a helical segment; that stretch reads DSDRKESLIYLVLIPYFKGKLDEYYKKESDPLAELGLV. Topologically, residues 197 to 248 are cytoplasmic; the sequence is SSDNNNNNNDNINDQIQQLEEQIQQQQTIVNGNNNSNNNNKKLKIKFLILIR. A helical transmembrane segment spans residues 249–287; it reads FLKGSKTLKKLKTIFLKVYPFISAIYEALFFIYQLLYLY. Residues 288 to 355 lie on the Peroxisomal matrix side of the membrane; that stretch reads EYTNYYTPFF…LDSILDYSKY (68 aa). The helical transmembrane segment at 356–380 threads the bilayer; the sequence is ILPLSVFIFKSLEWWYSENRISAPT. The Cytoplasmic segment spans residues 381–459; sequence LPIPTPPTPS…EQLRKIYETV (79 aa). 4 residues coordinate Zn(2+): Cys-406, Cys-409, Cys-426, and Cys-429. The segment at 406–444 adopts an RING-type; degenerate zinc-finger fold; that stretch reads CPLCLKERTNPTICGSGFVFCYPCIFGYVNEHSKCPITF.

The protein belongs to the pex2/pex10/pex12 family. As to quaternary structure, component of the PEX2-PEX10-PEX12 retrotranslocation channel.

The protein localises to the peroxisome membrane. Its pathway is protein modification; protein ubiquitination. Its function is as follows. Component of a retrotranslocation channel required for peroxisome organization by mediating export of the PEX5 receptor from peroxisomes to the cytosol, thereby promoting PEX5 recycling. The retrotranslocation channel is composed of PEX2, PEX10 and PEX12; each subunit contributing transmembrane segments that coassemble into an open channel that specifically allows the passage of PEX5 through the peroxisomal membrane. PEX12 also regulates PEX5 recycling by activating the E3 ubiquitin-protein ligase activity of PEX10. When PEX5 recycling is compromised, PEX12 stimulates PEX10-mediated polyubiquitination of PEX5, leading to its subsequent degradation. The sequence is that of Putative peroxisome assembly protein 12 (pex12) from Dictyostelium discoideum (Social amoeba).